Consider the following 273-residue polypeptide: Putative pyruvate, phosphate dikinase regulatory protein (273 aa).

153-160 (GVSRTSKS) lines the ADP pocket.

The protein belongs to the pyruvate, phosphate/water dikinase regulatory protein family. PDRP subfamily.

It carries out the reaction N(tele)-phospho-L-histidyl/L-threonyl-[pyruvate, phosphate dikinase] + ADP = N(tele)-phospho-L-histidyl/O-phospho-L-threonyl-[pyruvate, phosphate dikinase] + AMP + H(+). It catalyses the reaction N(tele)-phospho-L-histidyl/O-phospho-L-threonyl-[pyruvate, phosphate dikinase] + phosphate + H(+) = N(tele)-phospho-L-histidyl/L-threonyl-[pyruvate, phosphate dikinase] + diphosphate. Its function is as follows. Bifunctional serine/threonine kinase and phosphorylase involved in the regulation of the pyruvate, phosphate dikinase (PPDK) by catalyzing its phosphorylation/dephosphorylation. The chain is Putative pyruvate, phosphate dikinase regulatory protein from Ehrlichia chaffeensis (strain ATCC CRL-10679 / Arkansas).